Here is a 119-residue protein sequence, read N- to C-terminus: Spermidine export protein MdtJ (119 aa).

4 helical membrane-spanning segments follow: residues 1–21 (MIYW…TLAL), 31–51 (AGFI…SFSV), 54–74 (IALG…ITLF), and 81–101 (ETLT…ILLI).

It belongs to the drug/metabolite transporter (DMT) superfamily. Small multidrug resistance (SMR) (TC 2.A.7.1) family. MdtJ subfamily. In terms of assembly, forms a complex with MdtI.

The protein localises to the cell inner membrane. In terms of biological role, catalyzes the excretion of spermidine. The chain is Spermidine export protein MdtJ (mdtJ) from Cronobacter sakazakii (strain ATCC BAA-894) (Enterobacter sakazakii).